The sequence spans 191 residues: 3-isopropylmalate dehydratase small subunit (191 aa).

Belongs to the LeuD family. LeuD type 1 subfamily. Heterodimer of LeuC and LeuD.

The enzyme catalyses (2R,3S)-3-isopropylmalate = (2S)-2-isopropylmalate. It participates in amino-acid biosynthesis; L-leucine biosynthesis; L-leucine from 3-methyl-2-oxobutanoate: step 2/4. Its function is as follows. Catalyzes the isomerization between 2-isopropylmalate and 3-isopropylmalate, via the formation of 2-isopropylmaleate. This Staphylococcus haemolyticus (strain JCSC1435) protein is 3-isopropylmalate dehydratase small subunit.